We begin with the raw amino-acid sequence, 615 residues long: Angiotensin-converting enzyme (615 aa).

A signal peptide spans 1–17; it reads MRLFLLALLATLAVTQA. In terms of domain architecture, Peptidase M2 spans 19–607; the sequence is VKEEIQAKEY…IKNNVHIGWT (589 aa). A glycan (N-linked (GlcNAc...) asparagine) is linked at N53. A disulfide bridge connects residues C133 and C141. N-linked (GlcNAc...) asparagine glycans are attached at residues N196 and N311. Residues C336 and C354 are joined by a disulfide bond. H367 lines the Zn(2+) pocket. Residue E368 is the Proton acceptor of the active site. Positions 371 and 395 each coordinate Zn(2+). H497 acts as the Proton donor in catalysis. A disulfide bond links C522 and C540.

Belongs to the peptidase M2 family. It depends on Zn(2+) as a cofactor. In terms of processing, glycosylated. In terms of tissue distribution, expressed in vesicular structures in spermatocytes and early spermatids (at protein level).

The protein resides in the secreted. The protein localises to the extracellular space. The catalysed reaction is Release of a C-terminal dipeptide, oligopeptide-|-Xaa-Yaa, when Xaa is not Pro, and Yaa is neither Asp nor Glu. Thus, conversion of angiotensin I to angiotensin II, with increase in vasoconstrictor activity, but no action on angiotensin II.. With respect to regulation, inhibited by captopril and, to a lesser extent, by lisinopril, trandolaprilat, fosinoprilat and enalaprilat. Its function is as follows. May be involved in the specific maturation or degradation of a number of bioactive peptides. May play a role in the contractions of the heart, gut and testes, and in spermatid differentiation. This chain is Angiotensin-converting enzyme (Ance), found in Drosophila melanogaster (Fruit fly).